A 416-amino-acid chain; its full sequence is Serine hydroxymethyltransferase 1 (416 aa).

(6S)-5,6,7,8-tetrahydrofolate-binding positions include leucine 121 and glycine 125–leucine 127. Residue lysine 229 is modified to N6-(pyridoxal phosphate)lysine. Residues glutamate 245 and serine 354 to phenylalanine 356 contribute to the (6S)-5,6,7,8-tetrahydrofolate site.

Belongs to the SHMT family. As to quaternary structure, homodimer. The cofactor is pyridoxal 5'-phosphate.

It is found in the cytoplasm. It carries out the reaction (6R)-5,10-methylene-5,6,7,8-tetrahydrofolate + glycine + H2O = (6S)-5,6,7,8-tetrahydrofolate + L-serine. It participates in one-carbon metabolism; tetrahydrofolate interconversion. Its pathway is amino-acid biosynthesis; glycine biosynthesis; glycine from L-serine: step 1/1. In terms of biological role, catalyzes the reversible interconversion of serine and glycine with tetrahydrofolate (THF) serving as the one-carbon carrier. This reaction serves as the major source of one-carbon groups required for the biosynthesis of purines, thymidylate, methionine, and other important biomolecules. Also exhibits THF-independent aldolase activity toward beta-hydroxyamino acids, producing glycine and aldehydes, via a retro-aldol mechanism. In Vibrio vulnificus (strain CMCP6), this protein is Serine hydroxymethyltransferase 1.